A 262-amino-acid polypeptide reads, in one-letter code: Indole-3-glycerol phosphate synthase (262 aa).

It belongs to the TrpC family.

The enzyme catalyses 1-(2-carboxyphenylamino)-1-deoxy-D-ribulose 5-phosphate + H(+) = (1S,2R)-1-C-(indol-3-yl)glycerol 3-phosphate + CO2 + H2O. Its pathway is amino-acid biosynthesis; L-tryptophan biosynthesis; L-tryptophan from chorismate: step 4/5. In Leuconostoc mesenteroides subsp. mesenteroides (strain ATCC 8293 / DSM 20343 / BCRC 11652 / CCM 1803 / JCM 6124 / NCDO 523 / NBRC 100496 / NCIMB 8023 / NCTC 12954 / NRRL B-1118 / 37Y), this protein is Indole-3-glycerol phosphate synthase.